We begin with the raw amino-acid sequence, 365 residues long: DNA replication and repair protein RecF (365 aa).

ATP is bound at residue 30 to 37 (GANGQGKT).

It belongs to the RecF family.

It is found in the cytoplasm. Its function is as follows. The RecF protein is involved in DNA metabolism; it is required for DNA replication and normal SOS inducibility. RecF binds preferentially to single-stranded, linear DNA. It also seems to bind ATP. The sequence is that of DNA replication and repair protein RecF from Geobacter metallireducens (strain ATCC 53774 / DSM 7210 / GS-15).